We begin with the raw amino-acid sequence, 520 residues long: AMP-binding domain-containing enzyme iboA (520 aa).

180 to 191 (LTSGSTSGSPKV) contacts ATP. Positions 397-447 (DGNFHTGDLFEKQLDGSYLFRGRGDDWIKSEDSRFIDTKAIEEKINDVCSD) match the FACS motif.

The protein belongs to the ATP-dependent AMP-binding enzyme family. It depends on Mg(2+) as a cofactor.

Its pathway is secondary metabolite biosynthesis. In terms of biological role, AMP-binding domain-containing enzyme; part of the gene cluster that mediates the biosynthesis of the psychoactive metabolites ibotenic acid and muscimol. The first committed step is glutamate hydroxylation by the 2-oxoglutarate-dependent dioxygenase iboH, and the last step is decarboxylation of ibotenic acid to muscimol by the decarboxylase iboD. The order of the intermediate reactions is somewhat ambiguous. IboA likely activates the carboxylic acid at position 5 to introduce an amide bond, and the flavin monooxygenase iboF generates the N-O bond. There are several options for the latter step. One option is that iboF directly hydroxylates the amide nitrogen formed by iboA to produce a hydroxamic acid species. Another option is that iboF hydroxylates an external N-containing compound, whose resulting N-O bond is subsequently introduced into the hydroxyglutamate scaffold. The paralogous PLP-dependent cystathionine gamma-synthase-like enzymes iboG1 and iboG2 are likely involved in substitution of the OH group at position 3 by the O-N moiety. The first cyclic intermediate is most probably tricholomic acid which is likely desaturated to ibotenic acid by the cytochrome P450 monooxygenase iboC. This Amanita muscaria (strain Koide BX008) protein is AMP-binding domain-containing enzyme iboA.